A 138-amino-acid chain; its full sequence is Putative pre-16S rRNA nuclease (138 aa).

Belongs to the YqgF nuclease family.

It is found in the cytoplasm. Could be a nuclease involved in processing of the 5'-end of pre-16S rRNA. This chain is Putative pre-16S rRNA nuclease, found in Karelsulcia muelleri (strain GWSS) (Sulcia muelleri).